The chain runs to 468 residues: Mitochondrial distribution and morphology protein 10 (468 aa).

Positions 370–386 are enriched in basic and acidic residues; that stretch reads ERDGLPGIQRDDHDMHH. The segment at 370-394 is disordered; it reads ERDGLPGIQRDDHDMHHHPQRPHAS.

Belongs to the MDM10 family. As to quaternary structure, component of the ER-mitochondria encounter structure (ERMES) or MDM complex, composed of MMM1, MDM10, MDM12 and MDM34. Associates with the mitochondrial outer membrane sorting assembly machinery SAM(core) complex.

It localises to the mitochondrion outer membrane. Its function is as follows. Component of the ERMES/MDM complex, which serves as a molecular tether to connect the endoplasmic reticulum and mitochondria. Components of this complex are involved in the control of mitochondrial shape and protein biogenesis and may function in phospholipid exchange. MDM10 is involved in the late assembly steps of the general translocase of the mitochondrial outer membrane (TOM complex). Functions in the TOM40-specific route of the assembly of outer membrane beta-barrel proteins, including the association of TOM40 with the receptor TOM22 and small TOM proteins. Can associate with the SAM(core) complex as well as the MDM12-MMM1 complex, both involved in late steps of the major beta-barrel assembly pathway, that is responsible for biogenesis of all outer membrane beta-barrel proteins. May act as a switch that shuttles between both complexes and channels precursor proteins into the TOM40-specific pathway. Plays a role in mitochondrial morphology and in the inheritance of mitochondria. This Ajellomyces dermatitidis (strain ER-3 / ATCC MYA-2586) (Blastomyces dermatitidis) protein is Mitochondrial distribution and morphology protein 10.